The chain runs to 256 residues: Cytoplasmic envelopment protein 1 (256 aa).

It belongs to the herpesviridae cytoplasmic envelopment protein 1 family.

Its subcellular location is the virion. It is found in the virion tegument. The protein localises to the host cytoplasm. It localises to the host Golgi apparatus. Its function is as follows. Plays a critical role in cytoplasmic virus egress. Participates in the final step of tegumentation and envelope acquisition within the host cytoplasm. In Homo sapiens (Human), this protein is Cytoplasmic envelopment protein 1 (U75).